The primary structure comprises 314 residues: Olfactory receptor 9I1 (314 aa).

Over 1–25 (MAKNNLTRVTEFILMGFMDHPKLEI) the chain is Extracellular. A glycan (N-linked (GlcNAc...) asparagine) is linked at Asn5. A helical membrane pass occupies residues 26 to 46 (PLFLVFLSFYLVTLLGNVGMI). Residues 47–54 (MLIQVDVK) are Cytoplasmic-facing. Residues 55–75 (LYTPMYFFLSHLSLLDACYTS) form a helical membrane-spanning segment. The Extracellular segment spans residues 76–99 (VITPQILATLATGKTVISYGHCAA). Cysteines 97 and 189 form a disulfide. A helical membrane pass occupies residues 100–120 (QFFLFTICAGTECFLLAVMAY). Residues 121–139 (DRYAAIRNPLLYTVAMNPR) lie on the Cytoplasmic side of the membrane. Residues 140 to 160 (LCWSLVVGAYVCGVSGAILRT) form a helical membrane-spanning segment. Residues 161–197 (TCTFTLSFCKDNQINFFFCDLPPLLKLACSDTANIEI) are Extracellular-facing. Residues 198 to 217 (VIIFFGNFVILANASVILIS) form a helical membrane-spanning segment. Over 218-237 (YLLIIKTILKVKSSGGRAKT) the chain is Cytoplasmic. Residues 238 to 258 (FSTCASHITAVALFFGALIFM) traverse the membrane as a helical segment. Residues 259-271 (YLQSGSGKSLEED) lie on the Extracellular side of the membrane. The chain crosses the membrane as a helical span at residues 272 to 292 (KVVSVFYTVVIPMLNPLIYSL). Residues 293–314 (RNKDVKDAFRKVARRLQVSLSM) are Cytoplasmic-facing.

This sequence belongs to the G-protein coupled receptor 1 family.

It localises to the cell membrane. Functionally, odorant receptor. The chain is Olfactory receptor 9I1 (OR9I1) from Homo sapiens (Human).